A 523-amino-acid polypeptide reads, in one-letter code: 2-isopropylmalate synthase (523 aa).

The Pyruvate carboxyltransferase domain maps to 5–267 (VIIFDTTLRD…HTAINHQEIW (263 aa)). Mn(2+) contacts are provided by D14, H202, H204, and N238. Residues 392–523 (RLDYFSVQSS…QHNENNKETV (132 aa)) form a regulatory domain region.

The protein belongs to the alpha-IPM synthase/homocitrate synthase family. LeuA type 1 subfamily. In terms of assembly, homodimer. Mn(2+) is required as a cofactor.

Its subcellular location is the cytoplasm. The enzyme catalyses 3-methyl-2-oxobutanoate + acetyl-CoA + H2O = (2S)-2-isopropylmalate + CoA + H(+). The protein operates within amino-acid biosynthesis; L-leucine biosynthesis; L-leucine from 3-methyl-2-oxobutanoate: step 1/4. Catalyzes the condensation of the acetyl group of acetyl-CoA with 3-methyl-2-oxobutanoate (2-ketoisovalerate) to form 3-carboxy-3-hydroxy-4-methylpentanoate (2-isopropylmalate). The protein is 2-isopropylmalate synthase of Shigella dysenteriae serotype 1 (strain Sd197).